A 271-amino-acid polypeptide reads, in one-letter code: MTTLTHIPQGTPITLESIGKRYGNRTVLDNLQLRITAGQFVAVVGRSGCGKSTLLRLLAGLEAASDGTLLSGNALLSHAKDETRLMFQEARLLPWKKVIDNVGLGLRGHWRDEALQVLDTVGLADRANEWPAALSGGQKQRVALARALIHRPRLLLLDEPLGALDALTRIEMQGLIERLWQQHGFTVLLVTHDVSEAIALADRVLLIEEGRIGLDLAIDLPRPRRKGSAKLAALEAEVLERVLSPPQGIEASRQGIKASRQGTATSRRVAN.

The region spanning 13–234 is the ABC transporter domain; it reads ITLESIGKRY…RKGSAKLAAL (222 aa). Residue 45–52 participates in ATP binding; sequence GRSGCGKS. Positions 250 to 271 are disordered; the sequence is EASRQGIKASRQGTATSRRVAN. A compositionally biased stretch (polar residues) spans 260–271; sequence RQGTATSRRVAN.

This sequence belongs to the ABC transporter superfamily. Aliphatic sulfonates importer (TC 3.A.1.17.2) family. The complex is composed of two ATP-binding proteins (SsuB), two transmembrane proteins (SsuC) and a solute-binding protein (SsuA).

Its subcellular location is the cell inner membrane. The catalysed reaction is ATP + H2O + aliphatic sulfonate-[sulfonate-binding protein]Side 1 = ADP + phosphate + aliphatic sulfonateSide 2 + [sulfonate-binding protein]Side 1.. Its function is as follows. Part of the ABC transporter complex SsuABC involved in aliphatic sulfonates import. Responsible for energy coupling to the transport system. The chain is Aliphatic sulfonates import ATP-binding protein SsuB from Yersinia pestis bv. Antiqua (strain Antiqua).